The sequence spans 399 residues: Zinc finger TRAF-type-containing protein 1 (399 aa).

Residues 1–13 (MSGAEEAGGGGPA) are compositionally biased toward gly residues. A disordered region spans residues 1–21 (MSGAEEAGGGGPAAGPAGAVP). The segment at 106–151 (CTVCLDLPKASVYQCTNGHLMCAGCFIHLLADARLKEEQATCPNCR) adopts an RING-type; degenerate zinc-finger fold. The segment at 152 to 210 (CEISKSLCCRNLAVEKAVSELPSECGFCLRQFPRSLLERHQKEECQDRVTQCKYKRIGC) adopts a TRAF-type zinc-finger fold.

The protein belongs to the ZFTRAF1 family. As to quaternary structure, interacts with LGALS3. As to expression, expressed in heart, brain, liver, testis and kidney.

The protein resides in the cytoplasm. The protein localises to the perinuclear region. This Mus musculus (Mouse) protein is Zinc finger TRAF-type-containing protein 1.